A 77-amino-acid polypeptide reads, in one-letter code: Lantipeptide prochlorosin 4.3 (77 aa).

Positions 1–64 (MSEEQLKAFI…DDELEGVAGG (64 aa)) are excised as a propeptide. 2,3-didehydrobutyrine is present on Thr65. The lanthionine (Ser-Cys) cross-link spans 67 to 70 (SGGC). A cross-link (beta-methyllanthionine (Thr-Cys)) is located at residues 72-76 (TSMFC).

Cross-links are proved in vitro, when coepressed in E.coli with the ProcM lanthionine synthetase. Post-translationally, the lanthionine residue has both a DL configuration (with 2S,6R stereochemistry) and a LL configuration (with 2R,6R stereochemistry). DL and LL diastomers have a 4:1 ratio. It is unknown whether nonenzymatic cyclization occur, but authors favor a model in which ProcM does generate all thioether cross-links. The beta-methyllanthionine residue has a DL configuration (with 2S,3S,6R stereochemistry). In terms of processing, maturation of prochlorosin involves the enzymatic conversion of Thr, and Ser into dehydrated AA and the formation of thioether bonds with cysteines. This is followed by membrane translocation and cleavage of the modified precursor.

The protein localises to the secreted. In terms of biological role, lanthionine-containing peptide (lantipeptide) with unknown function. Does not show antibiotic activity against Lactococcus lactis 117 and Bacillus subtilis 6633 bacteria. Organisms that produce this peptide live in oligotrophic environments at very dilute concentrations, suggesting this peptide is not secreted to influence other bacteria. The chain is Lantipeptide prochlorosin 4.3 from Prochlorococcus marinus (strain MIT 9313).